We begin with the raw amino-acid sequence, 85 residues long: Protein RALF-like 28 (85 aa).

An N-terminal signal peptide occupies residues 1-31 (MSILKETKRFMVVAMFIACVFISNNMNVAVA). Disulfide bonds link cysteine 48-cysteine 53 and cysteine 66-cysteine 72. Residues 60 to 85 (NPYHRGCEKSKRCRGPDPPALPRKMI) are disordered. Over residues 75–85 (PDPPALPRKMI) the composition is skewed to pro residues.

It belongs to the plant rapid alkalinization factor (RALF) family.

It localises to the secreted. Cell signaling peptide that may regulate plant stress, growth, and development. Mediates a rapid alkalinization of extracellular space by mediating a transient increase in the cytoplasmic Ca(2+) concentration leading to a calcium-dependent signaling events through a cell surface receptor and a concomitant activation of some intracellular mitogen-activated protein kinases. This Arabidopsis thaliana (Mouse-ear cress) protein is Protein RALF-like 28 (RALFL28).